The sequence spans 130 residues: Small ribosomal subunit protein uS8 (130 aa).

It belongs to the universal ribosomal protein uS8 family. As to quaternary structure, part of the 30S ribosomal subunit. Contacts proteins S5 and S12.

Its function is as follows. One of the primary rRNA binding proteins, it binds directly to 16S rRNA central domain where it helps coordinate assembly of the platform of the 30S subunit. The polypeptide is Small ribosomal subunit protein uS8 (Ruegeria sp. (strain TM1040) (Silicibacter sp.)).